Here is a 328-residue protein sequence, read N- to C-terminus: 2-oxoglutarate-dependent dioxygenase gloE (328 aa).

Residues 170–271 form the Fe2OG dioxygenase domain; it reads TRTNLTFLKY…RYTLAYFLRP (102 aa). Fe cation-binding residues include histidine 194, aspartate 196, and histidine 249. Arginine 262 serves as a coordination point for 2-oxoglutarate.

Belongs to the iron/ascorbate-dependent oxidoreductase family. Fe(2+) is required as a cofactor.

Its pathway is mycotoxin biosynthesis. Its function is as follows. 2-oxoglutarate-dependent dioxygenase; part of the gene cluster that mediates the biosynthesis of pneumocandins, lipohexapeptides of the echinocandin family that prevent fungal cell wall formation by non-competitive inhibition of beta-1,3-glucan synthase. The 10,12-dimethylmyristoyl side chain is synthesized by the reducing polyketide synthase gloL/GLPKS4. The thioesterase gloN/GLHYD exclusively interacts with gloL/GLPKS4 to maintain turnover of the polyketide side chain. The 10R,12S-dimethylmyristic acid is then transferred to the first thiolation domain of the nonribosomal peptide synthetase gloA/GLNRPS4 by the acyl-AMP ligase gloD/GLligase, followed by its acylation to L-ornithine to trigger elongation of the cyclic hexapeptide. L-ornithine, 4R-hydroxyl-L-proline (generated from L-proline by the dioxygenase gloF/GLOXY2), 3S-hydroxyl-L-homotyrosine (generated by gloG/GLHtyB, gloH/GLHtyA, gloI/GLHtyC, gloJ/GLHtyD and hydroxylated at C-3 by the dioxygenase gloM/GLOXY1), 3R-hydroxyl-L-glutamine (generated from L-glutamine probably by the dioxygenase gloE/GLOXY3) and 3S-hydroxyl-L-proline (generated from L-proline by the dioxygenase gloF/GLOXY2 to yield pneumocandin B0), or 3S-hydroxyl-4S-methyl-L-proline (generated from L-leucine by the dioxygenase gloC/GLOXY4 to yield pneumocandin A0) are sequentially added to the growing chain. The last C domain of gloA/GLNRPS4 is proposed to be responsible for cyclization by condensation to form the peptide bond between L-ornithine and 3S-hydroxyl-4S-methyl-L-proline (for pneumocandin A0) or 3S-hydroxyl-L-proline (for pneumocandin B0). Finally, the subsequent C-4 hydroxylation of 3S-hydroxyl-L-homotyrosine and L-ornithine dihydroxylation at C-4 and C-5 are performed by the cytochrome P450 monooxygenases gloP/GLP450-1 and gloO/GLP450-2, respectively. The polypeptide is 2-oxoglutarate-dependent dioxygenase gloE (Glarea lozoyensis (strain ATCC 20868 / MF5171)).